The following is a 542-amino-acid chain: Propane 2-monooxygenase, hydroxylase component large subunit (542 aa).

Fe cation-binding residues include Glu97, Glu127, His130, Glu192, Glu226, and His229.

The protein belongs to the TmoA/XamoA family. In terms of assembly, the propane 2-monooxygenase multicomponent enzyme system is composed of an electron transfer component and a monooxygenase component interacting with the effector protein MimD. The electron transfer component is composed of a reductase (MimB), and the monooxygenase component is formed by a large subunit (MimA) and a small subunit (MimC). Requires the presence of the chaperonin-like protein MimG to ensure a productive folding, resulting of a soluble MimA, which leads to the active form of MimABCD. The cofactor is Fe(2+).

The enzyme catalyses propane + NADH + O2 + H(+) = propan-2-ol + NAD(+) + H2O. It catalyses the reaction acetone + NADH + O2 + H(+) = hydroxyacetone + NAD(+) + H2O. The catalysed reaction is butan-2-one + NADH + O2 + H(+) = 1-hydroxy-2-butanone + NAD(+) + H2O. It carries out the reaction phenol + NADH + O2 + H(+) = hydroquinone + NAD(+) + H2O. Component of the propane 2-monooxygenase multicomponent enzyme system which is involved in the degradation of propane via the O2-dependent hydroxylation of propane. Also involved in the degradation of acetone via the O2-dependent hydroxylation of acetone. Also able to catalyze the oxidation of phenol, methylethylketone (2-butanone), 1-propanol and 2-propanol. The chain is Propane 2-monooxygenase, hydroxylase component large subunit from Mycolicibacterium goodii (Mycobacterium goodii).